Reading from the N-terminus, the 1049-residue chain is Isoleucine--tRNA ligase (1049 aa).

A 'HIGH' region motif is present at residues 48–58 (PYTTGRIHLGT). The short motif at 596 to 600 (KMSKS) is the 'KMSKS' region element. K599 contacts ATP.

The protein belongs to the class-I aminoacyl-tRNA synthetase family. IleS type 2 subfamily. As to quaternary structure, monomer. Zn(2+) serves as cofactor.

It localises to the cytoplasm. The enzyme catalyses tRNA(Ile) + L-isoleucine + ATP = L-isoleucyl-tRNA(Ile) + AMP + diphosphate. Functionally, catalyzes the attachment of isoleucine to tRNA(Ile). As IleRS can inadvertently accommodate and process structurally similar amino acids such as valine, to avoid such errors it has two additional distinct tRNA(Ile)-dependent editing activities. One activity is designated as 'pretransfer' editing and involves the hydrolysis of activated Val-AMP. The other activity is designated 'posttransfer' editing and involves deacylation of mischarged Val-tRNA(Ile). This Methanothrix thermoacetophila (strain DSM 6194 / JCM 14653 / NBRC 101360 / PT) (Methanosaeta thermophila) protein is Isoleucine--tRNA ligase.